The sequence spans 440 residues: Thymidine phosphorylase (440 aa).

Belongs to the thymidine/pyrimidine-nucleoside phosphorylase family. In terms of assembly, homodimer.

The catalysed reaction is thymidine + phosphate = 2-deoxy-alpha-D-ribose 1-phosphate + thymine. The protein operates within pyrimidine metabolism; dTMP biosynthesis via salvage pathway; dTMP from thymine: step 1/2. The enzymes which catalyze the reversible phosphorolysis of pyrimidine nucleosides are involved in the degradation of these compounds and in their utilization as carbon and energy sources, or in the rescue of pyrimidine bases for nucleotide synthesis. The chain is Thymidine phosphorylase from Klebsiella pneumoniae subsp. pneumoniae (strain ATCC 700721 / MGH 78578).